The chain runs to 357 residues: Elongation factor Ts (357 aa).

The interval 82–85 is involved in Mg(2+) ion dislocation from EF-Tu; the sequence is TDFV.

Belongs to the EF-Ts family.

Its subcellular location is the cytoplasm. Its function is as follows. Associates with the EF-Tu.GDP complex and induces the exchange of GDP to GTP. It remains bound to the aminoacyl-tRNA.EF-Tu.GTP complex up to the GTP hydrolysis stage on the ribosome. This Campylobacter jejuni (strain RM1221) protein is Elongation factor Ts.